A 184-amino-acid polypeptide reads, in one-letter code: Interferon alpha-2 (184 aa).

An N-terminal signal peptide occupies residues 1–23 (MALPFSLLMALVVLSCHSSCSLG). 2 disulfides stabilise this stretch: Cys24–Cys122 and Cys52–Cys162.

The protein belongs to the alpha/beta interferon family. As to quaternary structure, interacts with IFNAR2.

The protein localises to the secreted. Functionally, produced by macrophages, IFN-alpha have antiviral activities. In Equus caballus (Horse), this protein is Interferon alpha-2.